The sequence spans 192 residues: Cytochrome c oxidase assembly factor 8 (192 aa).

Residues 1–26 (MAALRPGSRALRRLLCRSFSGGGGVR) constitute a mitochondrion transit peptide.

Belongs to the COA8 family. N-terminal mitochondrial targeting sequence is cleaved from the mature protein once in the mitochondrion. Post-translationally, in normal conditions, the cytoplasmic precursor protein is rapidly degraded by the ubiquitination-proteasome system (UPS). Oxidative stress induces protein stabilization and import into mitochondria where it protects COX from degradation. In terms of tissue distribution, expressed in atherosclerotic smooth muscle cells (at protein level). Expressed in aorta, brain, heart, kidney, liver, lung and spleen. Isoform 1 is strongly expressed in Kidney. Isoform 2 is strongly expressed in brain.

The protein resides in the mitochondrion inner membrane. In terms of biological role, required for cytochrome c complex (COX) IV assembly and function Protects COX assembly from oxidation-induced degradation, COX being the terminal component of the mitochondrial respiratory chain. This is Cytochrome c oxidase assembly factor 8 (Coa8) from Mus musculus (Mouse).